Reading from the N-terminus, the 191-residue chain is Cilia- and flagella-associated protein 20 (191 aa).

It belongs to the CFAP20 family.

Its subcellular location is the cytoplasm. The protein localises to the cytoskeleton. It localises to the cilium basal body. The protein resides in the cell projection. It is found in the cilium. Its subcellular location is the cilium axoneme. Functionally, cilium- and flagellum-specific protein required for axonemal structure organization and motility. Microtubule inner protein (MIP) part of the dynein-decorated doublet microtubules (DMTs) in cilia axoneme, which is required for motile cilia beating. May also play a role in cortical organization of basal body. This chain is Cilia- and flagella-associated protein 20 (CFAP20), found in Paramecium tetraurelia.